Reading from the N-terminus, the 395-residue chain is MGIKHLYQIIQENAPDAVKAGEIKNHFGRKVAIDASMSIYSFLIAVRSDGQQLTSETGETTSHLMGMFYRTLRIVDNGIKPVYVFDGAPPKLKSGELAKRFMRKSEAAEAHEEAKEVGTAEEVEKFSRRTVRVTREHNEECKKLLKLMGVPYIDAPTEAEAQCAVLARAGKVYAAASEDMDTLCFDSPILLRHLTFSEQRKEPILEIHLDRVLEGLDMDRKQFVDLCILLGCDYLDPIPKVGPNTALKLIRDHGSLEQVVEAIKSDPKKKYTIPEDWPYKEARELFFDPDVRKADHPDCDFKWEAPDVEGLVKFLVEEKAFSEDRVRNAAARLQKNLKTAQQSRLEGFFKPIAKTEQEKAVLKRKHEEKLELQKKKKKEDAKAKKEAKSKPRGTT.

An N-domain region spans residues 1-104 (MGIKHLYQII…GELAKRFMRK (104 aa)). Mg(2+) is bound at residue Asp-34. DNA-binding residues include Arg-47 and Arg-70. Asp-86, Glu-158, Glu-160, Asp-179, and Asp-181 together coordinate Mg(2+). The tract at residues 122 to 253 (EVEKFSRRTV…NTALKLIRDH (132 aa)) is I-domain. DNA is bound at residue Glu-158. Residues Gly-231 and Asp-233 each contribute to the DNA site. Position 233 (Asp-233) interacts with Mg(2+). The tract at residues 341-349 (QQSRLEGFF) is interaction with PCNA. Basic and acidic residues predominate over residues 360–389 (AVLKRKHEEKLELQKKKKKEDAKAKKEAKS). The interval 360-395 (AVLKRKHEEKLELQKKKKKEDAKAKKEAKSKPRGTT) is disordered.

It belongs to the XPG/RAD2 endonuclease family. FEN1 subfamily. Interacts with PCNA. Three molecules of FEN1 bind to one PCNA trimer with each molecule binding to one PCNA monomer. PCNA stimulates the nuclease activity without altering cleavage specificity. The cofactor is Mg(2+). Post-translationally, phosphorylated. Phosphorylation upon DNA damage induces relocalization to the nuclear plasma.

Its subcellular location is the nucleus. It is found in the nucleolus. The protein resides in the nucleoplasm. It localises to the mitochondrion. In terms of biological role, structure-specific nuclease with 5'-flap endonuclease and 5'-3' exonuclease activities involved in DNA replication and repair. During DNA replication, cleaves the 5'-overhanging flap structure that is generated by displacement synthesis when DNA polymerase encounters the 5'-end of a downstream Okazaki fragment. It enters the flap from the 5'-end and then tracks to cleave the flap base, leaving a nick for ligation. Also involved in the long patch base excision repair (LP-BER) pathway, by cleaving within the apurinic/apyrimidinic (AP) site-terminated flap. Acts as a genome stabilization factor that prevents flaps from equilibrating into structures that lead to duplications and deletions. Also possesses 5'-3' exonuclease activity on nicked or gapped double-stranded DNA, and exhibits RNase H activity. Also involved in replication and repair of rDNA and in repairing mitochondrial DNA. This Ajellomyces capsulatus (strain NAm1 / WU24) (Darling's disease fungus) protein is Flap endonuclease 1.